The sequence spans 374 residues: Peptide chain release factor 2 (374 aa).

An N5-methylglutamine modification is found at Q248.

This sequence belongs to the prokaryotic/mitochondrial release factor family. Methylated by PrmC. Methylation increases the termination efficiency of RF2.

It localises to the cytoplasm. Peptide chain release factor 2 directs the termination of translation in response to the peptide chain termination codons UGA and UAA. The polypeptide is Peptide chain release factor 2 (Thermomicrobium roseum (strain ATCC 27502 / DSM 5159 / P-2)).